A 557-amino-acid polypeptide reads, in one-letter code: Potassium-transporting ATPase potassium-binding subunit (557 aa).

12 helical membrane passes run 5–25 (GFLL…PLGS), 63–83 (LCAI…MLLG), 132–152 (GLTV…FALI), 170–190 (LLRI…LFFI), 253–273 (FVQM…FGEV), 283–303 (LLWA…WAEV), 329–349 (VLVS…AVIA), 356–376 (ALGG…FGGV), 379–399 (GLYG…LMIG), 416–436 (LTAL…ALAM), 484–504 (LLAF…MAIA), and 526–546 (LFVG…FIPA).

Belongs to the KdpA family. The system is composed of three essential subunits: KdpA, KdpB and KdpC.

The protein localises to the cell inner membrane. In terms of biological role, part of the high-affinity ATP-driven potassium transport (or Kdp) system, which catalyzes the hydrolysis of ATP coupled with the electrogenic transport of potassium into the cytoplasm. This subunit binds the periplasmic potassium ions and delivers the ions to the membrane domain of KdpB through an intramembrane tunnel. The polypeptide is Potassium-transporting ATPase potassium-binding subunit (Escherichia coli (strain K12 / MC4100 / BW2952)).